Here is a 607-residue protein sequence, read N- to C-terminus: Cytosolic Fe-S cluster assembly factor NAR1 (607 aa).

Residues C20, C82, C85, C88, C204, and C259 each coordinate [4Fe-4S] cluster. Positions 430–476 (KPNTGKSTNTTTTTTKSKVNPLAARRRARIANNRGKPETKSTSEVNS) are disordered. Positions 432-447 (NTGKSTNTTTTTTKSK) are enriched in low complexity. 2 residues coordinate [4Fe-4S] cluster: C496 and C500.

Belongs to the NARF family.

Functionally, component of the cytosolic Fe/S protein assembly machinery. Required for maturation of extramitochondrial Fe/S proteins. May play a role in the transfer of pre-assembled Fe/S clusters to target apoproteins. The sequence is that of Cytosolic Fe-S cluster assembly factor NAR1 (NAR1) from Candida albicans (strain SC5314 / ATCC MYA-2876) (Yeast).